The primary structure comprises 89 residues: Chromosomal protein MC1a (89 aa).

Its function is as follows. Protects DNA against thermal denaturation and modulates transcription. The polypeptide is Chromosomal protein MC1a (Methanothrix soehngenii (Methanosaeta concilii)).